The chain runs to 601 residues: Glutamine--fructose-6-phosphate aminotransferase [isomerizing] (601 aa).

Cys-2 functions as the Nucleophile; for GATase activity in the catalytic mechanism. In terms of domain architecture, Glutamine amidotransferase type-2 spans 2 to 216; it reads CGIVGYIGTN…DKEIVIVTKD (215 aa). SIS domains lie at 282-421 and 453-591; these read ILDE…EIGD and IAGE…VDKP. Lys-596 (for Fru-6P isomerization activity) is an active-site residue.

As to quaternary structure, homodimer.

The protein resides in the cytoplasm. It catalyses the reaction D-fructose 6-phosphate + L-glutamine = D-glucosamine 6-phosphate + L-glutamate. In terms of biological role, catalyzes the first step in hexosamine metabolism, converting fructose-6P into glucosamine-6P using glutamine as a nitrogen source. This is Glutamine--fructose-6-phosphate aminotransferase [isomerizing] from Listeria innocua serovar 6a (strain ATCC BAA-680 / CLIP 11262).